The chain runs to 490 residues: ATP synthase subunit beta, plastid (490 aa).

Residue 170 to 177 (GGAGVGKT) participates in ATP binding.

Belongs to the ATPase alpha/beta chains family. As to quaternary structure, F-type ATPases have 2 components, CF(1) - the catalytic core - and CF(0) - the membrane proton channel. CF(1) has five subunits: alpha(3), beta(3), gamma(1), delta(1), epsilon(1). CF(0) has four main subunits: a(1), b(1), b'(1) and c(9-12).

The protein localises to the plastid thylakoid membrane. The enzyme catalyses ATP + H2O + 4 H(+)(in) = ADP + phosphate + 5 H(+)(out). Its function is as follows. Produces ATP from ADP in the presence of a proton gradient across the membrane. The catalytic sites are hosted primarily by the beta subunits. The chain is ATP synthase subunit beta, plastid from Cuscuta reflexa (Southern Asian dodder).